The sequence spans 177 residues: Interleukin-7 (177 aa).

An N-terminal signal peptide occupies residues 1 to 25; the sequence is MFHVSFRYIFGLPPLILVLLPVASS. 3 disulfides stabilise this stretch: Cys-27–Cys-166, Cys-59–Cys-154, and Cys-72–Cys-117. N-linked (GlcNAc...) asparagine glycosylation is found at Asn-95, Asn-116, and Asn-141.

It belongs to the IL-7/IL-9 family. As to quaternary structure, interacts with IL7R and CSF2RG.

The protein localises to the secreted. Hematopoietic cytokine that plays an essential role in the development, expansion, and survival of naive and memory T-cells and B-cells thereby regulating the number of mature lymphocytes and maintaining lymphoid homeostasis. Mechanistically, exerts its biological effects through a receptor composed of IL7RA subunit and the cytokine receptor common subunit gamma/CSF2RG. Binding to the receptor leads to activation of various kinases including JAK1 or JAK3 depending on the cell type and subsequently propagation of signals through activation of several downstream signaling pathways including the PI3K/Akt/mTOR or the JAK-STAT5. The polypeptide is Interleukin-7 (IL7) (Homo sapiens (Human)).